The chain runs to 170 residues: Ubiquitin-conjugating enzyme E2 G1 (170 aa).

N-acetylmethionine is present on Met1. Thr2 carries the post-translational modification N-acetylthreonine; in Ubiquitin-conjugating enzyme E2 G1, N-terminally processed. The UBC core domain maps to 5–166; sequence QSALLLRRQL…VARCVRKSQE (162 aa). The active-site Glycyl thioester intermediate is Cys90.

The protein belongs to the ubiquitin-conjugating enzyme family. Autoubiquitinated in vitro. In terms of tissue distribution, widely expressed, mainly in skeletal muscle.

The enzyme catalyses S-ubiquitinyl-[E1 ubiquitin-activating enzyme]-L-cysteine + [E2 ubiquitin-conjugating enzyme]-L-cysteine = [E1 ubiquitin-activating enzyme]-L-cysteine + S-ubiquitinyl-[E2 ubiquitin-conjugating enzyme]-L-cysteine.. It functions in the pathway protein modification; protein ubiquitination. In terms of biological role, accepts ubiquitin from the E1 complex and catalyzes its covalent attachment to other proteins. In vitro catalyzes 'Lys-48'-, as well as 'Lys-63'-linked polyubiquitination. May be involved in degradation of muscle-specific proteins. Mediates polyubiquitination of CYP3A4. The polypeptide is Ubiquitin-conjugating enzyme E2 G1 (UBE2G1) (Homo sapiens (Human)).